The sequence spans 224 residues: UPF0758 protein Patl_0046 (224 aa).

The 123-residue stretch at 102 to 224 folds into the MPN domain; sequence VFNSAQQTKH…AVSFAERGLI (123 aa). Residues histidine 173, histidine 175, and aspartate 186 each contribute to the Zn(2+) site. Residues 173–186 carry the JAMM motif motif; the sequence is HNHPSGVAEPSQAD.

This sequence belongs to the UPF0758 family.

This chain is UPF0758 protein Patl_0046, found in Pseudoalteromonas atlantica (strain T6c / ATCC BAA-1087).